We begin with the raw amino-acid sequence, 344 residues long: Heat-inducible transcription repressor HrcA (344 aa).

It belongs to the HrcA family.

Its function is as follows. Negative regulator of class I heat shock genes (grpE-dnaK-dnaJ and groELS operons). Prevents heat-shock induction of these operons. In Streptococcus equi subsp. zooepidemicus (strain H70), this protein is Heat-inducible transcription repressor HrcA.